The primary structure comprises 348 residues: Putative serine/threonine-protein phosphatase C26H8.05c (348 aa).

Residues Asp-53, His-55, Asp-81, and Asn-113 each contribute to the Mn(2+) site. Catalysis depends on His-114, which acts as the Proton donor. Residues His-163 and His-237 each contribute to the Mn(2+) site. Positions 259–282 (TNEEDSELDSDSASPVDDSPAPGD) are disordered. Residues 269 to 280 (DSASPVDDSPAP) show a composition bias toward low complexity. The residue at position 272 (Ser-272) is a Phosphoserine. At Leu-348 the chain carries Leucine methyl ester.

This sequence belongs to the PPP phosphatase family. PP-1 subfamily. The cofactor is Mn(2+).

It localises to the cytoplasm. The protein localises to the nucleus. The catalysed reaction is O-phospho-L-seryl-[protein] + H2O = L-seryl-[protein] + phosphate. It carries out the reaction O-phospho-L-threonyl-[protein] + H2O = L-threonyl-[protein] + phosphate. The chain is Putative serine/threonine-protein phosphatase C26H8.05c from Schizosaccharomyces pombe (strain 972 / ATCC 24843) (Fission yeast).